A 284-amino-acid polypeptide reads, in one-letter code: tRNA uridine(34) hydroxylase (284 aa).

A Rhodanese domain is found at 132 to 226 (AGRPVVMLDT…YFEEVGGAHY (95 aa)). Cysteine 186 (cysteine persulfide intermediate) is an active-site residue.

The protein belongs to the TrhO family.

The catalysed reaction is uridine(34) in tRNA + AH2 + O2 = 5-hydroxyuridine(34) in tRNA + A + H2O. In terms of biological role, catalyzes oxygen-dependent 5-hydroxyuridine (ho5U) modification at position 34 in tRNAs. This is tRNA uridine(34) hydroxylase from Burkholderia ambifaria (strain MC40-6).